Consider the following 225-residue polypeptide: 3-dehydroquinate dehydratase (225 aa).

3-dehydroquinate contacts are provided by residues 30–32 and arginine 62; that span reads EWR. The active-site Proton donor/acceptor is the histidine 118. The Schiff-base intermediate with substrate role is filled by lysine 143. 3-dehydroquinate-binding residues include arginine 186, serine 205, and glutamine 209.

Belongs to the type-I 3-dehydroquinase family. In terms of assembly, homodimer.

The catalysed reaction is 3-dehydroquinate = 3-dehydroshikimate + H2O. The protein operates within metabolic intermediate biosynthesis; chorismate biosynthesis; chorismate from D-erythrose 4-phosphate and phosphoenolpyruvate: step 3/7. In terms of biological role, involved in the third step of the chorismate pathway, which leads to the biosynthesis of aromatic amino acids. Catalyzes the cis-dehydration of 3-dehydroquinate (DHQ) and introduces the first double bond of the aromatic ring to yield 3-dehydroshikimate. This is 3-dehydroquinate dehydratase from Streptococcus thermophilus (strain ATCC BAA-491 / LMD-9).